Here is a 468-residue protein sequence, read N- to C-terminus: uncharacterized protein (468 aa).

One can recognise an HTH gntR-type domain in the interval methionine 1 to glutamine 69. Lysine 312 carries the N6-(pyridoxal phosphate)lysine modification.

This sequence in the C-terminal section; belongs to the class-I pyridoxal-phosphate-dependent aminotransferase family.

This is an uncharacterized protein from Escherichia coli (strain K12).